A 122-amino-acid chain; its full sequence is Basic phospholipase A2 CbII (122 aa).

Cystine bridges form between cysteine 26–cysteine 115, cysteine 28–cysteine 44, cysteine 43–cysteine 95, cysteine 49–cysteine 122, cysteine 50–cysteine 88, cysteine 57–cysteine 81, and cysteine 75–cysteine 86. Ca(2+) is bound by residues tyrosine 27, glycine 29, and glycine 31. The active site involves histidine 47. Aspartate 48 serves as a coordination point for Ca(2+). Aspartate 89 is an active-site residue.

Belongs to the phospholipase A2 family. Group I subfamily. D49 sub-subfamily. As to quaternary structure, heterodimer of an acidic subunit (CbIalpha or CbIbeta) and a basic subunit (CbII). The acidic subunit is non-toxic, and increases the toxicity of the basic subunit. It depends on Ca(2+) as a cofactor. As to expression, expressed by the venom gland.

It is found in the secreted. The enzyme catalyses a 1,2-diacyl-sn-glycero-3-phosphocholine + H2O = a 1-acyl-sn-glycero-3-phosphocholine + a fatty acid + H(+). Its function is as follows. Heterodimer: presynaptic neurotoxin. Functionally, monomer: Snake venom phospholipase A2 (PLA2) that exhibits strong anticoagulant effects by binding to factor Xa (F10) and inhibiting the prothrombinase activity (IC(50) is 20 nM). PLA2 catalyzes the calcium-dependent hydrolysis of the 2-acyl groups in 3-sn-phosphoglycerides. This chain is Basic phospholipase A2 CbII, found in Pseudocerastes fieldi (Field's horned viper).